Here is a 401-residue protein sequence, read N- to C-terminus: Inositol phosphorylceramide synthase catalytic subunit AUR1 (401 aa).

Residues 1 to 41 (MANPFSRWFLSERPPNCHVADLETSLDPHQTLLKVQKYKPA) lie on the Cytoplasmic side of the membrane. The helical transmembrane segment at 42-62 (LSDWVHYIFLGSIMLFVFITN) threads the bilayer. Topologically, residues 63 to 64 (PA) are lumenal. The chain crosses the membrane as a helical span at residues 65-85 (PWIFKILFYCFLGTLFIIPAT). At 86 to 87 (SQ) the chain is on the cytoplasmic side. A helical transmembrane segment spans residues 88–108 (FFFNALPILTWVALYFTSSYF). Topologically, residues 109–155 (PDDRRPPITVKVLPAVETILYGDNLSDILATSTNSFLDILAWLPYGL) are lumenal. Residue Asn132 is glycosylated (N-linked (GlcNAc...) asparagine). Residues 156-176 (FHFGAPFVVAAILFVFGPPTV) traverse the membrane as a helical segment. The Cytoplasmic portion of the chain corresponds to 177-178 (LQ). Residues 179 to 199 (GYAFAFGYMNLFGVIMQNVFP) form a helical membrane-spanning segment. At 200-245 (AAPPWYKILYGLQSANYDMHGSPGGLARIDKLLGINMYTTAFSNSS) the chain is on the lumenal side. The helical transmembrane segment at 246–266 (VIFGAFPSLHSGCATMEALFF) threads the bilayer. Residues 267 to 268 (CY) lie on the Cytoplasmic side of the membrane. Residues 269–289 (CFPKLKPLFIAYVCWLWWSTM) form a helical membrane-spanning segment. Topologically, residues 290 to 291 (YL) are lumenal. The helical transmembrane segment at 292–312 (THHYFVDLMAGSVLSYVIFQY) threads the bilayer. The Cytoplasmic portion of the chain corresponds to 313–401 (TKYTHLPIVD…SITSLGVKRA (89 aa)). A disordered region spans residues 374–401 (VSPSLFDGSTSVSRSSATSITSLGVKRA). Positions 382 to 395 (STSVSRSSATSITS) are enriched in low complexity. Phosphoserine occurs at positions 392 and 395.

The protein belongs to the AUR1 family. As to quaternary structure, component of the inositol phosphorylceramide synthase complex composed of at least AUR1 and KEI1.

The protein resides in the golgi apparatus. Its subcellular location is the golgi stack membrane. The catalysed reaction is an N-(2R-hydroxy-very-long-chain fatty acyl)-(R)-4-hydroxysphingoid base + a 1,2-diacyl-sn-glycero-3-phospho-(1D-myo-inositol) = a 1D-myo-inositol-1-phospho-N-[(R)-2-hydroxy-very-long-chain fatty acyl]-(R)-4-hydroxysphingoid base + a 1,2-diacyl-sn-glycerol. Its activity is regulated as follows. Inhibited by aureobasidin A (AbA), khafrefungin and rustmicin. In terms of biological role, catalytic component of the inositol phosphorylceramide synthase which catalyzes the addition of a phosphorylinositol group onto ceramide to form inositol phosphorylceramide, an essential step in sphingolipid biosynthesis. This Saccharomyces cerevisiae (strain ATCC 204508 / S288c) (Baker's yeast) protein is Inositol phosphorylceramide synthase catalytic subunit AUR1.